Here is a 27-residue protein sequence, read N- to C-terminus: Nemertide alpha-8 (27 aa).

Cystine bridges form between Cys-2/Cys-16, Cys-9/Cys-20, and Cys-15/Cys-26.

It belongs to the nemertide family. As to expression, confined to the epidermis and to the mucus layer.

Its subcellular location is the secreted. In terms of biological role, highly potent toxin against both insect and some mammalian sodium channels (Nav). It potently inhibits inactivation of insect sodium channels of B.germanica (BgNav1) and also delays the inactivation of mammalian Nav with potent activity on Nav1.3/SCN3A and Nav1.4/SCN4A. 1 uM is enough to completely inhibits the inactivation, resulting in sustained non-inactivating currents. In addition, the toxin significantly enhances the recovery from inactivation, and the open state is not required for the toxin to interact with the channel. In vivo, injection into brine shrimp (Artemia salina) stops movement or causes death after 24 hours (EC(50)=0.4 uM). The polypeptide is Nemertide alpha-8 (Riseriellus occultus (Ribbon worm)).